The chain runs to 103 residues: O2 contryphan Vc1 (103 aa).

An N-terminal signal peptide occupies residues 1-23 (MGKLTILFLVAAALLSTQVMVQG). Positions 24–67 (DGAHERTEAEEPQHHGAKRQDGTGGYPVDDVDMMQRIFRTPLKR) are excised as a propeptide. Basic and acidic residues predominate over residues 25-44 (GAHERTEAEEPQHHGAKRQD). Residues 25–50 (GAHERTEAEEPQHHGAKRQDGTGGYP) form a disordered region. Glutamine 68 carries the pyrrolidone carboxylic acid modification. Cysteines 70 and 83 form a disulfide. A propeptide spanning residues 99 to 103 (RRGRQ) is cleaved from the precursor.

This sequence belongs to the O2 superfamily. Pyrrolidone carboxylic acid at position 1 has no significant effect on the structure of contryphan-Vc1. As to expression, expressed by the venom gland.

It localises to the secreted. Functionally, unknown. Intracranial injection of the peptide into mice does not produce toxic effects. In addition, the peptide does not produce any observable changes to normal or depolarization-induced intracellular calcium levels in mouse dorsal root ganglion cells. In Conus victoriae (Queen Victoria cone), this protein is O2 contryphan Vc1.